The following is a 352-amino-acid chain: Uroporphyrinogen decarboxylase (352 aa).

Substrate contacts are provided by residues R29–R33, F48, D78, Y154, S209, and H322.

It belongs to the uroporphyrinogen decarboxylase family. In terms of assembly, homodimer.

It localises to the cytoplasm. It catalyses the reaction uroporphyrinogen III + 4 H(+) = coproporphyrinogen III + 4 CO2. It participates in porphyrin-containing compound metabolism; protoporphyrin-IX biosynthesis; coproporphyrinogen-III from 5-aminolevulinate: step 4/4. Functionally, catalyzes the decarboxylation of four acetate groups of uroporphyrinogen-III to yield coproporphyrinogen-III. The chain is Uroporphyrinogen decarboxylase from Bacillus pumilus (strain SAFR-032).